Consider the following 128-residue polypeptide: Nitrogen fixation nifHD region GlnB-like protein 2 (128 aa).

This sequence belongs to the P(II) protein family.

Its function is as follows. Could be involved in the regulation of nitrogen fixation. This chain is Nitrogen fixation nifHD region GlnB-like protein 2 (glnBB), found in Methanothermococcus thermolithotrophicus (Methanococcus thermolithotrophicus).